The chain runs to 288 residues: tRNA pseudouridine synthase B (288 aa).

Aspartate 38 acts as the Nucleophile in catalysis.

It belongs to the pseudouridine synthase TruB family. Type 1 subfamily.

The catalysed reaction is uridine(55) in tRNA = pseudouridine(55) in tRNA. In terms of biological role, responsible for synthesis of pseudouridine from uracil-55 in the psi GC loop of transfer RNAs. The protein is tRNA pseudouridine synthase B of Carboxydothermus hydrogenoformans (strain ATCC BAA-161 / DSM 6008 / Z-2901).